The chain runs to 240 residues: MKILLIGYGAMNQRVARLAEEKGHEIVGVIENTPKATTPYQQYQHIADVKDADVAIDFSNPNLLFPLLDEAFHLPLVVATTGEKEKLLNKLDELSKNMPVFFSANMSYGVHALTKILAAAVPLLDDFDIELTEAHHNKKVDAPSGTLEKLYDVIVSLKENVTPVYDRHELNEKRQPQDIGIHSIRGGTIVGEHEVLFAGTDETIQITHRAQSKDIFANGAIQAAERLVNKPNGFYTFDNL.

NAD(+) contacts are provided by residues 79–81 (ATT) and 103–106 (SANM). Residue His135 is the Proton donor/acceptor of the active site. His136 lines the (S)-2,3,4,5-tetrahydrodipicolinate pocket. The active-site Proton donor is Lys139. 145–146 (GT) lines the (S)-2,3,4,5-tetrahydrodipicolinate pocket.

It belongs to the DapB family.

The protein resides in the cytoplasm. The catalysed reaction is (S)-2,3,4,5-tetrahydrodipicolinate + NAD(+) + H2O = (2S,4S)-4-hydroxy-2,3,4,5-tetrahydrodipicolinate + NADH + H(+). The enzyme catalyses (S)-2,3,4,5-tetrahydrodipicolinate + NADP(+) + H2O = (2S,4S)-4-hydroxy-2,3,4,5-tetrahydrodipicolinate + NADPH + H(+). It functions in the pathway amino-acid biosynthesis; L-lysine biosynthesis via DAP pathway; (S)-tetrahydrodipicolinate from L-aspartate: step 4/4. In terms of biological role, catalyzes the conversion of 4-hydroxy-tetrahydrodipicolinate (HTPA) to tetrahydrodipicolinate. The sequence is that of 4-hydroxy-tetrahydrodipicolinate reductase from Staphylococcus aureus (strain MRSA252).